A 141-amino-acid chain; its full sequence is Putative antiporter subunit mnhB2 (141 aa).

The next 4 membrane-spanning stretches (helical) occupy residues 10–30 (TVTK…FFAG), 35–55 (GGGF…FLAF), 70–90 (KLMI…VFFG), and 116–136 (LFEL…MLAL).

It belongs to the CPA3 antiporters (TC 2.A.63) subunit B family. May form a heterooligomeric complex that consists of seven subunits: mnhA2, mnhB2, mnhC2, mnhD2, mnhE2, mnhF2 and mnhG2.

The protein resides in the cell membrane. This is Putative antiporter subunit mnhB2 (mnhB2) from Staphylococcus haemolyticus (strain JCSC1435).